Here is a 356-residue protein sequence, read N- to C-terminus: Growth hormone-regulated TBC protein 1-A (356 aa).

The disordered stretch occupies residues 1–29; that stretch reads MEERDRTGRTGQPQHRINQPSTARERANS. Residues 9 to 22 show a composition bias toward polar residues; it reads RTGQPQHRINQPST. The Rab-GAP TBC domain maps to 87–277; the sequence is GVPNEHRPLV…RIWDCLFYEG (191 aa).

Functionally, may act as a GTPase-activating protein for Rab family protein(s). In Danio rerio (Zebrafish), this protein is Growth hormone-regulated TBC protein 1-A (grtp1a).